Consider the following 261-residue polypeptide: Cytochrome c oxidase subunit 3 (261 aa).

Residues 1–15 (MTHQTHAYHMVNPSP) lie on the Mitochondrial matrix side of the membrane. A helical membrane pass occupies residues 16 to 34 (WPLTGALSALLMTSGLAMW). Residues 35–40 (FHFNST) are Mitochondrial intermembrane-facing. Residues 41–66 (ILLMIGLTTNTLTMYQWWRDVIREST) form a helical membrane-spanning segment. Residues 67–72 (FQGHHT) lie on the Mitochondrial matrix side of the membrane. Residues 73–105 (PTVQKGLRYGMILFIISEVLFFTGFFWAFYHSS) traverse the membrane as a helical segment. The Mitochondrial intermembrane segment spans residues 106-128 (LAPTPELGGCWPPTGIHPLNPLE). Residues 129–152 (VPLLNTSVLLASGVSITWAHHSLM) traverse the membrane as a helical segment. Topologically, residues 153 to 155 (EGN) are mitochondrial matrix. Residues 156 to 183 (RYPMLQALFITIALGVYFTLLQASEYYE) form a helical membrane-spanning segment. Residues 184 to 190 (APFTISD) lie on the Mitochondrial intermembrane side of the membrane. The helical transmembrane segment at 191 to 223 (GVYGSTFFVATGFHGLHVIIGSTFLIVCFFRQL) threads the bilayer. The Mitochondrial matrix portion of the chain corresponds to 224–232 (KFHFTSNHH). The helical transmembrane segment at 233 to 256 (FGFEAAAWYWHFVDVVWLFLYVSI) threads the bilayer. At 257–261 (YWWGS) the chain is on the mitochondrial intermembrane side.

It belongs to the cytochrome c oxidase subunit 3 family. Component of the cytochrome c oxidase (complex IV, CIV), a multisubunit enzyme composed of 14 subunits. The complex is composed of a catalytic core of 3 subunits MT-CO1, MT-CO2 and MT-CO3, encoded in the mitochondrial DNA, and 11 supernumerary subunits COX4I, COX5A, COX5B, COX6A, COX6B, COX6C, COX7A, COX7B, COX7C, COX8 and NDUFA4, which are encoded in the nuclear genome. The complex exists as a monomer or a dimer and forms supercomplexes (SCs) in the inner mitochondrial membrane with NADH-ubiquinone oxidoreductase (complex I, CI) and ubiquinol-cytochrome c oxidoreductase (cytochrome b-c1 complex, complex III, CIII), resulting in different assemblies (supercomplex SCI(1)III(2)IV(1) and megacomplex MCI(2)III(2)IV(2)).

It is found in the mitochondrion inner membrane. It carries out the reaction 4 Fe(II)-[cytochrome c] + O2 + 8 H(+)(in) = 4 Fe(III)-[cytochrome c] + 2 H2O + 4 H(+)(out). In terms of biological role, component of the cytochrome c oxidase, the last enzyme in the mitochondrial electron transport chain which drives oxidative phosphorylation. The respiratory chain contains 3 multisubunit complexes succinate dehydrogenase (complex II, CII), ubiquinol-cytochrome c oxidoreductase (cytochrome b-c1 complex, complex III, CIII) and cytochrome c oxidase (complex IV, CIV), that cooperate to transfer electrons derived from NADH and succinate to molecular oxygen, creating an electrochemical gradient over the inner membrane that drives transmembrane transport and the ATP synthase. Cytochrome c oxidase is the component of the respiratory chain that catalyzes the reduction of oxygen to water. Electrons originating from reduced cytochrome c in the intermembrane space (IMS) are transferred via the dinuclear copper A center (CU(A)) of subunit 2 and heme A of subunit 1 to the active site in subunit 1, a binuclear center (BNC) formed by heme A3 and copper B (CU(B)). The BNC reduces molecular oxygen to 2 water molecules using 4 electrons from cytochrome c in the IMS and 4 protons from the mitochondrial matrix. The sequence is that of Cytochrome c oxidase subunit 3 (MT-CO3) from Raphicerus campestris (Steenbok).